The chain runs to 212 residues: Major fimbrial subunit (212 aa).

An N-terminal signal peptide occupies residues 1–18 (MKKTLLGSLILLAFATNA). Residues cysteine 42 and cysteine 82 are joined by a disulfide bond.

It belongs to the fimbrial protein family.

It localises to the fimbrium. Its function is as follows. Mediates adherence to oropharyngeal epithelial cells. Helps the airway colonization process. The chain is Major fimbrial subunit (hifA) from Haemophilus influenzae.